The chain runs to 212 residues: Response regulator SsrB (212 aa).

The segment at 1 to 138 (MKEYKILLVD…PTLNREAILA (138 aa)) is required for prevention of DNA binding in absence of phosphorylation and for full stimulation of activity by acidic pH. The Response regulatory domain maps to 5-121 (KILLVDDHEI…VLLAALQTVA (117 aa)). Residue aspartate 56 is modified to 4-aspartylphosphate. Positions 143–208 (DTTNHQLLTL…ELLNCARRMR (66 aa)) constitute an HTH luxR-type domain. The H-T-H motif DNA-binding region spans 167–186 (NHGISEKLHISIKTVETHRM). An S-nitrosocysteine modification is found at cysteine 203.

As to quaternary structure, homodimer; disulfide-linked; dimerizes upon DNA-binding. In terms of processing, ssrB phosphorylated on Asp-56 activates the expression of virulence genes whereas the unphosphorylated form controls biofilm formation. Independently of SsrA, can be phosphorylated by small inorganic phosphate donors (such as acetyl phosphate or phosphoramidate). Disulfide bond formation at Cys-203 is not required for dimerization. Post-translationally, cys-203 may serve as a redox sensor that is nitrosylated in presence of reactive nitrogen species (RNS) generated by the host, the modification modulates its DNA-binding activity. Cys-203 is relatively resistant to oxidation by hydrogen peroxide.

It is found in the cytoplasm. Member of the two-component regulatory system SsrA/SsrB (SpiR/SsrB) that is required for intracellular proliferation and systemic dissemination within the host. When inside acidic Salmonella-containing vesicles (SCV) within host cells the SsrA sensor kinase autophosphorylates and the phosphoryl group is transferred to the response regulator SsrB; phosphorylated SsrB activates the expression of genes encoding virulence proteins, including pathogenicity island 2 (SPI2) and other horizontally acquired genes, but also ancestral genes; it can stimulate gene expression both by recruiting RNA polymerase and by antagonizing the action of the transcriptional repressor hns (H-NS). Can also act independently of sensor kinase ssrA to support the dormant carrier state by directing the transcription of factors required for biofilm formation. DNA-binding is stimulated by acidic pH conditions, and binding promotes bending of DNA both upstream and downstream of binding sites. Binds a degenerate 18-basepair palindromic sequence with a 7-4-7 internal organization, and regulates gene expression from 86 operons. When phosphorylated, activates the transcription of the ABC transporter complex dalSTUV, which helps protect the organism from oxidative killing by host neutrophils. Binds the phoP promoter to stimulate expression in acidic pH conditions. Antagonizes hns to activate the transcription of ugtL. Following invasion of host cells, binds the hilD and hilA regulatory regions to repress their transcription and consequently to repress transcription of pathogenicity island 1 (SPI1) encoding genes involved in host cell invasion. Binds the promoters of the flagellar master regulators flhD and flhC to repress their expression and consequently to suppress flagellar motility and promote evasion of the host inflammasome during infection of host cells. Activates expression of sseI/srfH, sifA, sifB, sseJ and regulates its own expression. When unphosphorylated, relieves the hns-mediated repression of master biofilm regulator csgD by binding and bending the csgD regulatory region. May act as early as in the lumen of the host small intestine, to activate the expression of virulence proteins prior to invasion of host cells. In Salmonella typhimurium (strain LT2 / SGSC1412 / ATCC 700720), this protein is Response regulator SsrB.